The chain runs to 265 residues: Mlc titration factor A (265 aa).

Positions 111, 148, 152, and 211 each coordinate Zn(2+).

This sequence belongs to the MtfA family. As to quaternary structure, interacts with Mlc. Requires Zn(2+) as cofactor.

The protein resides in the cytoplasm. Involved in the modulation of the activity of the glucose-phosphotransferase system (glucose-PTS). Interacts with the transcriptional repressor Mlc, preventing its interaction with DNA and leading to the modulation of expression of genes regulated by Mlc, including ptsG, which encodes the PTS system glucose-specific EIICB component. Its function is as follows. Shows zinc-dependent metallopeptidase activity. This Enterobacter sp. (strain 638) protein is Mlc titration factor A.